Here is a 142-residue protein sequence, read N- to C-terminus: Mini-ribonuclease 3 (142 aa).

Asp33 is an active-site residue.

This sequence belongs to the MrnC RNase family. Homodimer. It depends on Mg(2+) as a cofactor.

The protein resides in the cytoplasm. Functionally, involved in correct processing of both the 5' and 3' ends of 23S rRNA precursor. Processes 30S rRNA precursor transcript even in absence of ribonuclease 3 (Rnc); Rnc processes 30S rRNA into smaller rRNA precursors. This chain is Mini-ribonuclease 3, found in Thermoanaerobacter sp. (strain X514).